A 934-amino-acid chain; its full sequence is Bifunctional uridylyltransferase/uridylyl-removing enzyme (934 aa).

A uridylyltransferase region spans residues 1–379; that stretch reads MSAHDLKLEE…TFSRRKRKLS (379 aa). The segment at 380 to 736 is uridylyl-removing; the sequence is DDGAFISENH…AKPHAFEAVT (357 aa). Residues 496–613 form the HD domain; it reads VDEHLLRCIA…IDFADTVQTM (118 aa). ACT domains are found at residues 737 to 818 and 848 to 931; these read EITV…DMLA and VIEV…RSPQ.

This sequence belongs to the GlnD family. Mg(2+) is required as a cofactor.

It catalyses the reaction [protein-PII]-L-tyrosine + UTP = [protein-PII]-uridylyl-L-tyrosine + diphosphate. The catalysed reaction is [protein-PII]-uridylyl-L-tyrosine + H2O = [protein-PII]-L-tyrosine + UMP + H(+). With respect to regulation, uridylyltransferase (UTase) activity is inhibited by glutamine, while glutamine activates uridylyl-removing (UR) activity. Its function is as follows. Modifies, by uridylylation and deuridylylation, the PII regulatory proteins (GlnB and homologs), in response to the nitrogen status of the cell that GlnD senses through the glutamine level. Under low glutamine levels, catalyzes the conversion of the PII proteins and UTP to PII-UMP and PPi, while under higher glutamine levels, GlnD hydrolyzes PII-UMP to PII and UMP (deuridylylation). Thus, controls uridylylation state and activity of the PII proteins, and plays an important role in the regulation of nitrogen assimilation and metabolism. The protein is Bifunctional uridylyltransferase/uridylyl-removing enzyme of Brucella suis (strain ATCC 23445 / NCTC 10510).